We begin with the raw amino-acid sequence, 122 residues long: Small ribosomal subunit protein uS13 (122 aa).

Residues glycine 95 to lysine 122 form a disordered region.

The protein belongs to the universal ribosomal protein uS13 family. Part of the 30S ribosomal subunit. Forms a loose heterodimer with protein S19. Forms two bridges to the 50S subunit in the 70S ribosome.

Its function is as follows. Located at the top of the head of the 30S subunit, it contacts several helices of the 16S rRNA. In the 70S ribosome it contacts the 23S rRNA (bridge B1a) and protein L5 of the 50S subunit (bridge B1b), connecting the 2 subunits; these bridges are implicated in subunit movement. Contacts the tRNAs in the A and P-sites. In Corynebacterium diphtheriae (strain ATCC 700971 / NCTC 13129 / Biotype gravis), this protein is Small ribosomal subunit protein uS13.